The chain runs to 430 residues: L-cysteine:1D-myo-inositol 2-amino-2-deoxy-alpha-D-glucopyranoside ligase (430 aa).

Cysteine 48 is a binding site for Zn(2+). L-cysteinyl-5'-AMP contacts are provided by residues 48-51 (CGIT), threonine 63, and 86-88 (NIT). A 'HIGH' region motif is present at residues 50-60 (ITPYDSTHLGH). A 'ERGGDP' region motif is present at residues 192-197 (ERGGDP). Tryptophan 232 contributes to the L-cysteinyl-5'-AMP binding site. Cysteine 236 contributes to the Zn(2+) binding site. 254 to 256 (GSD) is a binding site for L-cysteinyl-5'-AMP. Histidine 261 contributes to the Zn(2+) binding site. Isoleucine 288 is an L-cysteinyl-5'-AMP binding site. The short motif at 294 to 298 (KMSKS) is the 'KMSKS' region element.

The protein belongs to the class-I aminoacyl-tRNA synthetase family. MshC subfamily. In terms of assembly, monomer. The cofactor is Zn(2+).

It catalyses the reaction 1D-myo-inositol 2-amino-2-deoxy-alpha-D-glucopyranoside + L-cysteine + ATP = 1D-myo-inositol 2-(L-cysteinylamino)-2-deoxy-alpha-D-glucopyranoside + AMP + diphosphate + H(+). Catalyzes the ATP-dependent condensation of GlcN-Ins and L-cysteine to form L-Cys-GlcN-Ins. This chain is L-cysteine:1D-myo-inositol 2-amino-2-deoxy-alpha-D-glucopyranoside ligase (mshC), found in Corynebacterium efficiens (strain DSM 44549 / YS-314 / AJ 12310 / JCM 11189 / NBRC 100395).